Reading from the N-terminus, the 180-residue chain is ATP synthase subunit delta (180 aa).

Belongs to the ATPase delta chain family. In terms of assembly, F-type ATPases have 2 components, F(1) - the catalytic core - and F(0) - the membrane proton channel. F(1) has five subunits: alpha(3), beta(3), gamma(1), delta(1), epsilon(1). CF(0) has four main subunits: a(1), b(1), b'(1) and c(10-14). The alpha and beta chains form an alternating ring which encloses part of the gamma chain. F(1) is attached to F(0) by a central stalk formed by the gamma and epsilon chains, while a peripheral stalk is formed by the delta, b and b' chains.

The protein localises to the cellular thylakoid membrane. F(1)F(0) ATP synthase produces ATP from ADP in the presence of a proton or sodium gradient. F-type ATPases consist of two structural domains, F(1) containing the extramembraneous catalytic core and F(0) containing the membrane proton channel, linked together by a central stalk and a peripheral stalk. During catalysis, ATP synthesis in the catalytic domain of F(1) is coupled via a rotary mechanism of the central stalk subunits to proton translocation. In terms of biological role, this protein is part of the stalk that links CF(0) to CF(1). It either transmits conformational changes from CF(0) to CF(1) or is implicated in proton conduction. This Prochlorococcus marinus (strain MIT 9215) protein is ATP synthase subunit delta.